A 137-amino-acid polypeptide reads, in one-letter code: L-ectoine synthase (137 aa).

The segment at 115-137 is disordered; the sequence is EVHDESGAYPADPELAREPVAAD.

This sequence belongs to the ectoine synthase family.

The enzyme catalyses (2S)-4-acetamido-2-aminobutanoate = L-ectoine + H2O. Its pathway is amine and polyamine biosynthesis; ectoine biosynthesis; L-ectoine from L-aspartate 4-semialdehyde: step 3/3. Its function is as follows. Catalyzes the circularization of gamma-N-acetyl-alpha,gamma-diaminobutyric acid (ADABA) to ectoine (1,4,5,6-tetrahydro-2-methyl-4-pyrimidine carboxylic acid), which is an excellent osmoprotectant. The polypeptide is L-ectoine synthase (Sphingopyxis alaskensis (strain DSM 13593 / LMG 18877 / RB2256) (Sphingomonas alaskensis)).